Consider the following 113-residue polypeptide: Defense protein 2 (113 aa).

Belongs to the attacin/sarcotoxin-2 family.

The protein resides in the secreted. Its function is as follows. Has antibacterial activity against both Gram-positive and Gram-negative bacteria. In Lonomia obliqua (Moth), this protein is Defense protein 2.